Here is an 895-residue protein sequence, read N- to C-terminus: Receptor-like protein kinase FERONIA (895 aa).

Positions methionine 1 to alanine 27 are cleaved as a signal peptide. Over alanine 28–alanine 447 the chain is Extracellular. N-linked (GlcNAc...) asparagine glycosylation is found at asparagine 46, asparagine 124, asparagine 142, asparagine 171, asparagine 219, asparagine 269, asparagine 305, asparagine 330, asparagine 345, and asparagine 410. A helical transmembrane segment spans residues isoleucine 448–phenylalanine 468. Residues glycine 469–arginine 895 lie on the Cytoplasmic side of the membrane. A Protein kinase domain is found at phenylalanine 536–alanine 810. ATP contacts are provided by residues leucine 542–valine 550 and lysine 565. Aspartate 661 serves as the catalytic Proton acceptor. The segment at asparagine 844–arginine 895 is disordered. Serine 858, serine 866, serine 871, and serine 874 each carry phosphoserine. Polar residues predominate over residues alanine 884 to arginine 895.

Belongs to the protein kinase superfamily. Ser/Thr protein kinase family. In terms of assembly, interacts with ROPGEF1. Interacts with RALF1; triggering phosphorylation status and subsequent activation. Interacts with LRE and LLG1. Interacts, via its extracellular domain, with FERONIA at the synergid cell surface. Post-translationally, autophosphorylated. Phosphorylated at Ser-858, Ser-871 and Ser-874 upon activation by RALF1. As to expression, expressed in leaves, buds, flowers, siliques, young ovules primordia, and young anthers with immature pollen, but not detected in mature pollen. Highest expression in the synergid cells of the female gametophyte.

The protein localises to the cell membrane. The enzyme catalyses L-seryl-[protein] + ATP = O-phospho-L-seryl-[protein] + ADP + H(+). The catalysed reaction is L-threonyl-[protein] + ATP = O-phospho-L-threonyl-[protein] + ADP + H(+). Receptor-like protein kinase that mediates the female control of male gamete delivery during fertilization, including growth cessation of compatible pollen tubes ensuring a reproductive isolation barriers, by regulating MLO7 subcellular polarization upon pollen tube perception in the female gametophyte synergids. Required for cell elongation during vegetative growth, mostly in a brassinosteroids- (BR-) independent manner. Acts as an upstream regulator for the Rac/Rop-signaling pathway that controls ROS-mediated root hair development. Seems to regulate a cross-talk between brassinosteroids and ethylene signaling pathways during hypocotyl elongation. Negative regulator of brassinosteroid response in light-grown hypocotyls, but required for brassinosteroid response in etiolated seedlings. Mediates sensitivity to powdery mildew (e.g. Golovinomyces orontii). Positive regulator of auxin-promoted growth that represses the abscisic acid (ABA) signaling via the activation of ABI2 phosphatase. Required for RALF1-mediated extracellular alkalinization in a signaling pathway preventing cell expansion. This is Receptor-like protein kinase FERONIA from Arabidopsis thaliana (Mouse-ear cress).